Reading from the N-terminus, the 245-residue chain is Interleukin-1 receptor-associated kinase 1-binding protein 1 homolog (245 aa).

This sequence belongs to the IRAK1BP1 family.

It is found in the cytoplasm. Its subcellular location is the nucleus. May be part of a signaling pathway that leads to NF-kappa-B activation. The protein is Interleukin-1 receptor-associated kinase 1-binding protein 1 homolog (irak1bp1) of Xenopus laevis (African clawed frog).